The following is a 52-amino-acid chain: Sperm protamine P1 (52 aa).

The disordered stretch occupies residues Met1–Arg27. Residues Ser9–Arg27 are compositionally biased toward basic residues.

This sequence belongs to the protamine P1 family. As to expression, testis.

It is found in the nucleus. The protein resides in the chromosome. Its function is as follows. Protamines substitute for histones in the chromatin of sperm during the haploid phase of spermatogenesis. They compact sperm DNA into a highly condensed, stable and inactive complex. The sequence is that of Sperm protamine P1 (PRM1) from Rhinolophus ferrumequinum (Greater horseshoe bat).